The primary structure comprises 425 residues: Tol-Pal system protein TolB (425 aa).

An N-terminal signal peptide occupies residues 1–23; it reads MQMMKKRILLCLLVGMTCLPVLA.

It belongs to the TolB family. In terms of assembly, the Tol-Pal system is composed of five core proteins: the inner membrane proteins TolA, TolQ and TolR, the periplasmic protein TolB and the outer membrane protein Pal. They form a network linking the inner and outer membranes and the peptidoglycan layer.

The protein resides in the periplasm. Part of the Tol-Pal system, which plays a role in outer membrane invagination during cell division and is important for maintaining outer membrane integrity. This Albidiferax ferrireducens (strain ATCC BAA-621 / DSM 15236 / T118) (Rhodoferax ferrireducens) protein is Tol-Pal system protein TolB.